Here is an 85-residue protein sequence, read N- to C-terminus: WAP four-disulfide core domain protein 12 (85 aa).

The first 21 residues, 1–21, serve as a signal peptide directing secretion; the sequence is MWPNSILVLMTLLISSTLVTG. Residues 25-72 enclose the WAP domain; that stretch reads KGEEKRVCPPDYVRCIRQDDPQCYSDNDCGDQEICCFWQCGFKCVLPV. Intrachain disulfides connect Cys-32–Cys-60, Cys-39–Cys-64, Cys-47–Cys-59, and Cys-53–Cys-68.

In terms of tissue distribution, constitutively expressed in tongue.

The protein localises to the secreted. Antibacterial protein which inhibits the growth of E.coli and S.aureus. Putative acid-stable proteinase inhibitor. The chain is WAP four-disulfide core domain protein 12 from Mus musculus (Mouse).